The chain runs to 346 residues: Methionine import ATP-binding protein MetN 1 (346 aa).

The ABC transporter domain maps to 2 to 241; the sequence is IELKNVSKVF…PQHVTTKKFV (240 aa). 38 to 45 serves as a coordination point for ATP; the sequence is GYSGAGKS.

It belongs to the ABC transporter superfamily. Methionine importer (TC 3.A.1.24) family. The complex is composed of two ATP-binding proteins (MetN), two transmembrane proteins (MetI) and a solute-binding protein (MetQ).

Its subcellular location is the cell membrane. The catalysed reaction is L-methionine(out) + ATP + H2O = L-methionine(in) + ADP + phosphate + H(+). The enzyme catalyses D-methionine(out) + ATP + H2O = D-methionine(in) + ADP + phosphate + H(+). Its function is as follows. Part of the ABC transporter complex MetNIQ involved in methionine import. Responsible for energy coupling to the transport system. This is Methionine import ATP-binding protein MetN 1 from Bacillus cereus (strain ATCC 14579 / DSM 31 / CCUG 7414 / JCM 2152 / NBRC 15305 / NCIMB 9373 / NCTC 2599 / NRRL B-3711).